The chain runs to 152 residues: ESAT-6 secretion machinery protein EssA (152 aa).

Residues 1–114 lie on the Cytoplasmic side of the membrane; it reads MLMNSVIALT…PYIQNKQEKK (114 aa). The interval 62–83 is disordered; that stretch reads ERQQQIKNDMFQNQASHSTRLN. The span at 66–80 shows a compositional bias: polar residues; the sequence is QIKNDMFQNQASHST. Residues 115–135 traverse the membrane as a helical segment; sequence IFPYILMSVGAFLTLGFVIFS. Topologically, residues 136–152 are extracellular; the sequence is IHKGRRTKNESARKSNI.

The protein belongs to the EssA family.

Its subcellular location is the cell membrane. In terms of biological role, component of the ESAT-6 secretion system (Ess). Required for the secretion of EsxA and EsxB. The protein is ESAT-6 secretion machinery protein EssA of Staphylococcus aureus (strain COL).